A 169-amino-acid polypeptide reads, in one-letter code: S-ribosylhomocysteine lyase (169 aa).

Fe cation-binding residues include histidine 54, histidine 58, and cysteine 128.

Belongs to the LuxS family. Homodimer. The cofactor is Fe cation.

It catalyses the reaction S-(5-deoxy-D-ribos-5-yl)-L-homocysteine = (S)-4,5-dihydroxypentane-2,3-dione + L-homocysteine. Its function is as follows. Involved in the synthesis of autoinducer 2 (AI-2) which is secreted by bacteria and is used to communicate both the cell density and the metabolic potential of the environment. The regulation of gene expression in response to changes in cell density is called quorum sensing. Catalyzes the transformation of S-ribosylhomocysteine (RHC) to homocysteine (HC) and 4,5-dihydroxy-2,3-pentadione (DPD). The polypeptide is S-ribosylhomocysteine lyase (Tolumonas auensis (strain DSM 9187 / NBRC 110442 / TA 4)).